Here is a 385-residue protein sequence, read N- to C-terminus: MKALQFGAGNIGRGFIGKTLSESGFSVIFSDVNQNIVDAINYNREYFVKIIGSNQNKTVNIKRVSAINSNDSNIKKIISSVDLITTAVGPTALEKIALIITQGIIFKIKNQFTKPLNIIACENKIKSSSFLKQVVLKNLPIKYHDYLNKYIGFIDCSIDTIIPSINNKDDLFLTVEEFKEWIVNINQFKGAVLKIVDMKFSNNLDAFIERKLFTLNTGHAIAAYLGLIKNYKTIQDAISDKKIRVIVRSAMEESGSVLIKRYNFNKNDHLDYIEKIFLRFENPFLSDKLERIGRNPLQKLRREDRLIKPFLGAFEYNLPYSNLAKGIAAAFYYHNKNDLESIELSSSIKKQGLESTIIKICDLPVNSKEVYSIILEYNLIKKIIR.

3–14 is a binding site for NAD(+); that stretch reads ALQFGAGNIGRG.

Belongs to the mannitol dehydrogenase family.

The enzyme catalyses D-mannitol 1-phosphate + NAD(+) = beta-D-fructose 6-phosphate + NADH + H(+). The protein is Mannitol-1-phosphate 5-dehydrogenase of Buchnera aphidicola subsp. Acyrthosiphon pisum (strain 5A).